The following is a 334-amino-acid chain: MEIGKKIINIIKLLFDDWQNKAISILIAILMFVAFNFNKIESITTEKEFKIILNDQIALGKIPDFSKIKITIKVNKDDLKYLDLNKIILFIEASSIKIPGSYKLPIKIKNLNSIHIAEYKLSKTNVLLNLDNKVSKLVKIEPKFKLIEKDGKGEYFIAKYNILPENLLVYGPEQELKKINTIQTNVKEFDTRTLFVSDYLEVVPPNPLVMFEKSHVVVNIYLNKKYSNTTIKSPNLIFNNLKNGLEIKDKEKIINSENKMFVKIKTRLSEKQIKAHINNQNISLAFDLADIKTPGIYNIAANIILKENINETEIYDYEPKKIKLEIIESSEIKP.

A helical membrane pass occupies residues 22-38 (AISILIAILMFVAFNFN). YbbR-like domains lie at 43–128 (ITTE…NVLL) and 138–220 (VKIE…VVNI).

The protein resides in the membrane. The chain is YbbR-like domain-containing protein BB_0009 from Borreliella burgdorferi (strain ATCC 35210 / DSM 4680 / CIP 102532 / B31) (Borrelia burgdorferi).